The chain runs to 1206 residues: Phosphoglucan, water dikinase, chloroplastic (1206 aa).

Disordered stretches follow at residues 1–20 and 52–71; these read MTSL…PRRG and RSAA…DSSK. Residues 1–56 constitute a chloroplast transit peptide; the sequence is MTSLRPLETSLSIGGRPRRGLVLPPPGVGAGVLLRRGAMALPGRRGFACRGRSAAS. In terms of domain architecture, CBM20 spans 67 to 168; that stretch reads RDSSKQPLVH…KFDIVCHWNR (102 aa). H776 (tele-phosphohistidine intermediate) is an active-site residue.

Belongs to the PEP-utilizing enzyme family. As to quaternary structure, homodimer. Mg(2+) is required as a cofactor.

Its subcellular location is the plastid. It localises to the chloroplast. The catalysed reaction is [(1-&gt;4)-6-phospho-alpha-D-glucosyl](n) + n ATP + n H2O = [(1-&gt;4)-3,6-bisphospho-alpha-D-glucosyl](n) + n AMP + n phosphate + 2n H(+). Mediates the incorporation of phosphate into starch-like phospho-alpha-glucan, mostly at the C-3 position of glucose units. May be required for starch degradation, suggesting that the phosphate content of starch regulates its degradability. This Oryza sativa subsp. japonica (Rice) protein is Phosphoglucan, water dikinase, chloroplastic (GWD3).